Reading from the N-terminus, the 1426-residue chain is Protein RhsD (1426 aa).

The segment at 256–285 (AEEARTSSLSSSDSSRPLSASAFPDTLPGT) is disordered. Residues 262–277 (SSLSSSDSSRPLSASA) are compositionally biased toward low complexity. The segment at 320 to 1197 (YTEAGELLAV…LNEENPHHVY (878 aa)) is 28 X approximate tandem repeats. 27 repeat units span residues 334–356 (NTQV…HRYA), 357–378 (GRPE…LNPA), 379–421 (GLSY…ELAD), 422–442 (GSVT…TDAA), 443–464 (GRRT…TTPD), 465–485 (GRET…VSPD), 486–506 (GLES…TSRS), 507–529 (GETV…TDAT), 530–550 (GSTR…TDCS), 551–571 (GYQT…HREE), 572–592 (GISL…KDAQ), 593–613 (GRET…ITPD), 614–633 (GNRS…TTQG), 634–654 (GLTR…TNEN), 655–675 (GSHS…GGFD), 676–695 (GRTQ…SEDE), 696–715 (GLVI…RTVN), 716–738 (GEPA…HLSE), 739–762 (GHRV…QTVE), 812–832 (GGTP…VRSF), 833–861 (GSMA…HLNS), 862–882 (LVYD…ISGP), 883–905 (RQTR…LAPD), 906–941 (LDIR…NRIA), 942–970 (EDAH…VIRT), 971–995 (DDER…IQHG), and 996–1030 (EPLV…MSLS). A compositionally biased stretch (basic and acidic residues) spans 1073-1085 (ENGEREKAQRRSL). Positions 1073–1097 (ENGEREKAQRRSLAETLQQEGSENG) are disordered. Repeat unit 28 spans residues 1173 to 1197 (GNTAWSAEYDEWGNQLNEENPHHVY).

Belongs to the RHS family.

Functionally, rhs elements have a nonessential function. They may play an important role in the natural ecology of the cell. This is Protein RhsD (rhsD) from Escherichia coli (strain K12).